A 320-amino-acid polypeptide reads, in one-letter code: Malate dehydrogenase (320 aa).

Residues 10 to 15 and Asp34 contribute to the NAD(+) site; that span reads GAGQIG. The substrate site is built by Arg83 and Arg89. Residues Asn96 and 119–121 each bind NAD(+); that span reads ITN. 2 residues coordinate substrate: Asn121 and Arg152. The active-site Proton acceptor is His176.

It belongs to the LDH/MDH superfamily. MDH type 3 family.

The catalysed reaction is (S)-malate + NAD(+) = oxaloacetate + NADH + H(+). Functionally, catalyzes the reversible oxidation of malate to oxaloacetate. The protein is Malate dehydrogenase of Dinoroseobacter shibae (strain DSM 16493 / NCIMB 14021 / DFL 12).